The sequence spans 126 residues: Large-conductance mechanosensitive channel (126 aa).

2 helical membrane passes run 8–28 and 70–90; these read FAMR…AAFT and IQQI…VKVI.

The protein belongs to the MscL family. Homopentamer.

The protein resides in the cell membrane. In terms of biological role, channel that opens in response to stretch forces in the membrane lipid bilayer. May participate in the regulation of osmotic pressure changes within the cell. This is Large-conductance mechanosensitive channel from Exiguobacterium sp. (strain ATCC BAA-1283 / AT1b).